Consider the following 264-residue polypeptide: 3-methyl-2-oxobutanoate hydroxymethyltransferase (264 aa).

Residues Asp-45 and Asp-84 each coordinate Mg(2+). 3-methyl-2-oxobutanoate-binding positions include 45 to 46, Asp-84, and Lys-112; that span reads DS. Glu-114 is a binding site for Mg(2+). The Proton acceptor role is filled by Glu-181.

The protein belongs to the PanB family. In terms of assembly, homodecamer; pentamer of dimers. Mg(2+) is required as a cofactor.

It is found in the cytoplasm. It carries out the reaction 3-methyl-2-oxobutanoate + (6R)-5,10-methylene-5,6,7,8-tetrahydrofolate + H2O = 2-dehydropantoate + (6S)-5,6,7,8-tetrahydrofolate. Its pathway is cofactor biosynthesis; (R)-pantothenate biosynthesis; (R)-pantoate from 3-methyl-2-oxobutanoate: step 1/2. In terms of biological role, catalyzes the reversible reaction in which hydroxymethyl group from 5,10-methylenetetrahydrofolate is transferred onto alpha-ketoisovalerate to form ketopantoate. In Escherichia fergusonii (strain ATCC 35469 / DSM 13698 / CCUG 18766 / IAM 14443 / JCM 21226 / LMG 7866 / NBRC 102419 / NCTC 12128 / CDC 0568-73), this protein is 3-methyl-2-oxobutanoate hydroxymethyltransferase.